A 427-amino-acid chain; its full sequence is MSNSTALFQRARQVIPGGVNSPVRAFKGVGGTPVFIQKAAGAYITDTDGKQYIDYVGSWGPMVLGHNHPAIIDAVLKAVPNGLSFGAPTEGEITLAELVCRLIPSIELVRMVSSGTEATMSAIRLARGYTKRDKIIKFEGCYHGHSDSLLVKAGSGALTLGQPSSPGVPEDFAKHTLTCTYNDLNSVKCAFERYPQDIACLIIEPVAGNMNCVPPKPGFLQGVRELCDQYGALLIIDEVMTGFRVALGGAQAYYGVTPDLTALGKIIGGGMPVGAFGGKREIMEYIAPTGPVYQAGTLSGNPIAMAAGLACLTELSKPGNEQQLAEKTQQLAEGLKTLAKKHGVPFIAQYVGGMFGLFFTDVPEVTNFQDVMKCDVAKFNRFFHLMLEQGVYLAPSAFEAGFMSLAHSDADIEQTLKAADNAFAVLA.

K265 bears the N6-(pyridoxal phosphate)lysine mark.

It belongs to the class-III pyridoxal-phosphate-dependent aminotransferase family. HemL subfamily. Homodimer. Pyridoxal 5'-phosphate is required as a cofactor.

It is found in the cytoplasm. The enzyme catalyses (S)-4-amino-5-oxopentanoate = 5-aminolevulinate. Its pathway is porphyrin-containing compound metabolism; protoporphyrin-IX biosynthesis; 5-aminolevulinate from L-glutamyl-tRNA(Glu): step 2/2. The protein is Glutamate-1-semialdehyde 2,1-aminomutase of Actinobacillus succinogenes (strain ATCC 55618 / DSM 22257 / CCUG 43843 / 130Z).